The sequence spans 143 residues: Aspartate 1-decarboxylase (143 aa).

Residue serine 25 is the Schiff-base intermediate with substrate; via pyruvic acid of the active site. Serine 25 is subject to Pyruvic acid (Ser). Threonine 57 contributes to the substrate binding site. Tyrosine 58 serves as the catalytic Proton donor. 73-75 (GAA) provides a ligand contact to substrate.

This sequence belongs to the PanD family. As to quaternary structure, heterooctamer of four alpha and four beta subunits. It depends on pyruvate as a cofactor. Is synthesized initially as an inactive proenzyme, which is activated by self-cleavage at a specific serine bond to produce a beta-subunit with a hydroxyl group at its C-terminus and an alpha-subunit with a pyruvoyl group at its N-terminus.

The protein localises to the cytoplasm. It catalyses the reaction L-aspartate + H(+) = beta-alanine + CO2. Its pathway is cofactor biosynthesis; (R)-pantothenate biosynthesis; beta-alanine from L-aspartate: step 1/1. Catalyzes the pyruvoyl-dependent decarboxylation of aspartate to produce beta-alanine. This Mycolicibacterium paratuberculosis (strain ATCC BAA-968 / K-10) (Mycobacterium paratuberculosis) protein is Aspartate 1-decarboxylase.